A 453-amino-acid chain; its full sequence is 4,4'-diapolycopene-4,4'-dial dehydrogenase (453 aa).

The segment covering Met-1–Leu-20 has biased composition (basic and acidic residues). A disordered region spans residues Met-1–Ala-23. Catalysis depends on residues Glu-215 and Cys-249.

It belongs to the aldehyde dehydrogenase family.

The enzyme catalyses all-trans-4,4'-diapolycopene-4,4'-dial + 2 A + 2 H2O = all-trans-4,4'-diapolycopene-4,4'-dioate + 2 AH2 + 2 H(+). Its pathway is carotenoid biosynthesis. Its function is as follows. Involved in the biosynthesis of the major C30 carotenoid 4,4'-diapolycopene-4,4'-dioic acid, which protects B.firmus from peroxidative reactions. Catalyzes the oxidation of 4,4'-diapolycopene-4,4'-dial to yield 4,4'-diapolycopene-4,4'-dioic aci. In Cytobacillus firmus (Bacillus firmus), this protein is 4,4'-diapolycopene-4,4'-dial dehydrogenase.